Consider the following 501-residue polypeptide: Cytoplasmic tRNA 2-thiolation protein 2 (501 aa).

Over residues 1 to 12 (MCEMSEEYRESA) the composition is skewed to basic and acidic residues. 2 disordered regions span residues 1-23 (MCEMSEEYRESAPKGPPPPRLGT) and 192-214 (GVERQSQHCAQDPQSPTGPPTTA). N-acetylcysteine is present on cysteine 2. Residue serine 492 is modified to Phosphoserine.

The protein belongs to the CTU2/NCS2 family. In terms of assembly, component of a complex at least composed of URM1, CTU2/NCS2 and CTU1/ATPBD3.

The protein localises to the cytoplasm. It functions in the pathway tRNA modification; 5-methoxycarbonylmethyl-2-thiouridine-tRNA biosynthesis. Plays a central role in 2-thiolation of mcm(5)S(2)U at tRNA wobble positions of tRNA(Lys), tRNA(Glu) and tRNA(Gln). May act by forming a heterodimer with CTU1/ATPBD3 that ligates sulfur from thiocarboxylated URM1 onto the uridine of tRNAs at wobble position. This chain is Cytoplasmic tRNA 2-thiolation protein 2, found in Bos taurus (Bovine).